The sequence spans 503 residues: Trehalose-6-phosphate synthase (503 aa).

Polar residues predominate over residues 1–14 (MTDQSGNGVRSGSA). The disordered stretch occupies residues 1–20 (MTDQSGNGVRSGSASEAPPS). Arg-31 contacts D-glucose 6-phosphate. 51 to 52 (GG) is a binding site for UDP-alpha-D-glucose. D-glucose 6-phosphate is bound by residues Tyr-109 and Asp-163. UDP-alpha-D-glucose-binding residues include Arg-305 and Lys-310. Arg-343 is a D-glucose 6-phosphate binding site. A UDP-alpha-D-glucose-binding site is contributed by 408–412 (LVAKE).

Belongs to the glycosyltransferase 20 family. Homotetramer.

It catalyses the reaction ADP-alpha-D-glucose + D-glucose 6-phosphate = alpha,alpha-trehalose 6-phosphate + ADP + H(+). The enzyme catalyses CDP-alpha-D-glucose + D-glucose 6-phosphate = alpha,alpha-trehalose 6-phosphate + CDP + H(+). The catalysed reaction is GDP-alpha-D-glucose + D-glucose 6-phosphate = alpha,alpha-trehalose 6-phosphate + GDP + H(+). It carries out the reaction TDP-alpha-D-glucose + D-glucose 6-phosphate = 5-methyl-UDP + alpha,alpha-trehalose 6-phosphate + H(+). It catalyses the reaction D-glucose 6-phosphate + UDP-alpha-D-glucose = alpha,alpha-trehalose 6-phosphate + UDP + H(+). Its pathway is glycan biosynthesis; trehalose biosynthesis. Its function is as follows. Probably involved in the osmoprotection via the biosynthesis of trehalose and in the production of glycogen and alpha-glucan via the TreS-Pep2 branch involved in the biosynthesis of maltose-1-phosphate (M1P). Catalyzes the transfer of glucose from UDP-glucose (UDP-Glc) to D-glucose 6-phosphate (Glc-6-P) to form trehalose-6-phosphate. Probably also able to use ADP-Glc, CDP-Glc, GDP-Glc and TDP-Glc as glucosyl donors. The chain is Trehalose-6-phosphate synthase from Mycolicibacterium gilvum (strain PYR-GCK) (Mycobacterium gilvum (strain PYR-GCK)).